The chain runs to 1189 residues: Pesticidal crystal protein Cry1Ca (1189 aa).

It belongs to the delta endotoxin family.

Functionally, promotes colloidosmotic lysis by binding to the midgut epithelial cells of many lepidopteran larvae including Spodoptera species. In Bacillus thuringiensis subsp. entomocidus, this protein is Pesticidal crystal protein Cry1Ca (cry1Ca).